The sequence spans 209 residues: Mei4-dependent protein 1 (209 aa).

The N-terminal stretch at 1–22 (MLHATQLCYLLLFCFLPISISS) is a signal peptide.

The protein resides in the secreted. The protein is Mei4-dependent protein 1 (mde1) of Schizosaccharomyces pombe (strain 972 / ATCC 24843) (Fission yeast).